Consider the following 489-residue polypeptide: Beta-galactosidase (489 aa).

Lys116 bears the N6-methyllysine; partial mark. Lys135 carries the post-translational modification N6-methyllysine. Glu206 serves as the catalytic Proton donor. An N6-methyllysine; partial mark is found at Lys273 and Lys311. Lys332 is modified (N6-methyllysine). Residue Glu387 is the Nucleophile of the active site.

As to quaternary structure, homotetramer.

The catalysed reaction is Hydrolysis of terminal non-reducing beta-D-galactose residues in beta-D-galactosides.. The polypeptide is Beta-galactosidase (lacS) (Saccharolobus solfataricus (strain ATCC 35092 / DSM 1617 / JCM 11322 / P2) (Sulfolobus solfataricus)).